The sequence spans 2222 residues: Voltage-dependent R-type calcium channel subunit alpha-1E (2222 aa).

The Cytoplasmic portion of the chain corresponds to M1–P40. The stretch at N27 to F305 is one I repeat. Residues P41–L59 traverse the membrane as a helical segment. The Extracellular segment spans residues E60 to T78. Residues E79 to L97 traverse the membrane as a helical segment. The Cytoplasmic portion of the chain corresponds to G98–N109. The chain crosses the membrane as a helical span at residues G110 to L124. Topologically, residues A125–D136 are extracellular. The helical transmembrane segment at L137–P156 threads the bilayer. At S157 to Q174 the chain is on the cytoplasmic side. A helical membrane pass occupies residues I175 to S195. The Extracellular portion of the chain corresponds to G196–W277. An N-linked (GlcNAc...) asparagine glycan is attached at N205. A helical membrane pass occupies residues N278 to L301. The Cytoplasmic portion of the chain corresponds to S302–Q427. The binding to the beta subunit stretch occupies residues Q325–E342. D377 is a binding site for Ca(2+). Position 378 is a phosphoserine (S378). Ca(2+) is bound by residues S379, E381, and C383. Residue T391 is modified to Phosphothreonine. The stretch at E413–L657 is one II repeat. Residues V428–V447 form a helical membrane-spanning segment. Residues H448 to Y460 lie on the Extracellular side of the membrane. Residues Y461–G480 form a helical membrane-spanning segment. The Cytoplasmic segment spans residues M481–S489. A helical membrane pass occupies residues S490–W508. Residues A509–G518 lie on the Extracellular side of the membrane. Residues I519–W537 form a helical membrane-spanning segment. At A538–S556 the chain is on the cytoplasmic side. A helical membrane pass occupies residues L557–F576. At G577–W629 the chain is on the extracellular side. Residues S630–V654 traverse the membrane as a helical segment. Topologically, residues D655–Y1100 are cytoplasmic. Residues L680 to S727 form a disordered region. Phosphoserine occurs at positions 687, 696, 744, 766, and 806. Disordered stretches follow at residues N820 to G944 and N1042 to G1076. The segment covering R864–V877 has biased composition (basic residues). Low complexity predominate over residues S884 to E896. S898 bears the Phosphoserine mark. Composition is skewed to basic and acidic residues over residues D906 to R935 and T1044 to E1055. S1049 carries the phosphoserine modification. An III repeat occupies N1092–F1378. Residues I1101–A1117 traverse the membrane as a helical segment. At S1118–F1141 the chain is on the extracellular side. A helical transmembrane segment spans residues D1142–G1161. Residues L1162 to Y1169 lie on the Cytoplasmic side of the membrane. The chain crosses the membrane as a helical span at residues F1170–A1192. The Extracellular segment spans residues N1193–I1206. A helical transmembrane segment spans residues K1207–L1224. The Cytoplasmic segment spans residues P1225–N1243. The chain crosses the membrane as a helical span at residues I1244–F1263. At K1264 to E1350 the chain is on the extracellular side. Residues M1351–I1374 traverse the membrane as a helical segment. Topologically, residues I1375–S1431 are cytoplasmic. An IV repeat occupies N1415–F1678. The helical transmembrane segment at F1432–K1450 threads the bilayer. Residues Y1451–I1467 are Extracellular-facing. The chain crosses the membrane as a helical span at residues A1468–G1485. Residues F1486 to T1493 are Cytoplasmic-facing. Residues W1494–T1512 traverse the membrane as a helical segment. Topologically, residues D1513 to N1523 are extracellular. N-linked (GlcNAc...) asparagine glycans are attached at residues N1518 and N1523. A helical transmembrane segment spans residues M1524–G1542. The Cytoplasmic segment spans residues Y1543–Y1561. A helical transmembrane segment spans residues V1562 to F1581. The Extracellular segment spans residues G1582–L1650. An N-linked (GlcNAc...) asparagine glycan is attached at N1641. Residues A1651–D1676 traverse the membrane as a helical segment. The Cytoplasmic segment spans residues N1677–C2222. Positions H1691–P1726 constitute an EF-hand domain. Ca(2+) contacts are provided by D1704, R1710, and E1715. The tract at residues S1970–H2135 is disordered. The span at L1974–R1994 shows a compositional bias: basic and acidic residues. 2 positions are modified to phosphoserine: S2003 and S2022. A compositionally biased stretch (basic and acidic residues) spans N2010–Q2027. Residues S2046–P2061 are compositionally biased toward low complexity. Residues L2104 to L2123 show a composition bias toward polar residues. Residues H2124–H2135 show a composition bias toward low complexity.

The protein belongs to the calcium channel alpha-1 subunit (TC 1.A.1.11) family. CACNA1E subfamily. Interacts with EFHC1. Voltage-dependent calcium channels are multisubunit complexes, consisting of alpha-1, alpha-2, beta and delta subunits in a 1:1:1:1 ratio. The channel activity is directed by the pore-forming and voltage-sensitive alpha-1 subunit. In many cases, this subunit is sufficient to generate voltage-sensitive calcium channel activity. The auxiliary subunits beta and alpha-2/delta linked by a disulfide bridge regulate the channel activity. In terms of tissue distribution, expressed in central nervous system and in insulinoma.

The protein localises to the membrane. The enzyme catalyses Ca(2+)(in) = Ca(2+)(out). In terms of biological role, voltage-sensitive calcium channels (VSCC) mediate the entry of calcium ions into excitable cells and are also involved in a variety of calcium-dependent processes, including muscle contraction, hormone or neurotransmitter release, gene expression, cell motility, cell division and cell death. The isoform alpha-1E gives rise to R-type calcium currents. R-type calcium channels belong to the 'high-voltage activated' (HVA) group and are blocked by nickel. They are however insensitive to dihydropyridines (DHP). Calcium channels containing alpha-1E subunit could be involved in the modulation of firing patterns of neurons which is important for information processing. In Rattus norvegicus (Rat), this protein is Voltage-dependent R-type calcium channel subunit alpha-1E (Cacna1e).